Here is a 339-residue protein sequence, read N- to C-terminus: Dihydroorotate dehydrogenase (quinone) (339 aa).

Residues 62–66 (AGMDK) and T86 contribute to the FMN site. Substrate is bound at residue K66. 111 to 115 (NRMGF) is a binding site for substrate. 2 residues coordinate FMN: N139 and N172. N172 is a binding site for substrate. The active-site Nucleophile is S175. N177 serves as a coordination point for substrate. FMN is bound by residues K217 and T245. 246-247 (NT) contacts substrate. FMN contacts are provided by residues G268, G297, and 318 to 319 (YS).

This sequence belongs to the dihydroorotate dehydrogenase family. Type 2 subfamily. Monomer. The cofactor is FMN.

It is found in the cell membrane. It catalyses the reaction (S)-dihydroorotate + a quinone = orotate + a quinol. Its pathway is pyrimidine metabolism; UMP biosynthesis via de novo pathway; orotate from (S)-dihydroorotate (quinone route): step 1/1. Catalyzes the conversion of dihydroorotate to orotate with quinone as electron acceptor. This is Dihydroorotate dehydrogenase (quinone) from Shewanella sediminis (strain HAW-EB3).